The chain runs to 165 residues: Phosphopantetheine adenylyltransferase (165 aa).

T9 lines the substrate pocket. ATP-binding positions include 9 to 10 and H17; that span reads TF. Residues K41, L73, and R87 each coordinate substrate. Residues 88-90, E98, and 123-129 contribute to the ATP site; these read GLR and YQFISGT.

This sequence belongs to the bacterial CoaD family. As to quaternary structure, homohexamer. The cofactor is Mg(2+).

Its subcellular location is the cytoplasm. The enzyme catalyses (R)-4'-phosphopantetheine + ATP + H(+) = 3'-dephospho-CoA + diphosphate. Its pathway is cofactor biosynthesis; coenzyme A biosynthesis; CoA from (R)-pantothenate: step 4/5. Reversibly transfers an adenylyl group from ATP to 4'-phosphopantetheine, yielding dephospho-CoA (dPCoA) and pyrophosphate. This is Phosphopantetheine adenylyltransferase from Polynucleobacter necessarius subsp. necessarius (strain STIR1).